Here is a 1102-residue protein sequence, read N- to C-terminus: Probable ubiquitin-conjugating enzyme E2 23 (1102 aa).

Disordered stretches follow at residues 1–20 (MEHEQDDPGTSTNVGVDSSV), 25–111 (ASLS…DGNY), 396–418 (LPKVTSDDPPQRNPSVSKEPVHE), 579–602 (SPGNSFEEATQQDNGYQDSESHQE), 661–710 (DESV…DIYA), and 760–800 (QAES…KNIL). Basic and acidic residues predominate over residues 31 to 44 (DSEHPNIYRQDIVK). Residues 59 to 88 (GDSDSDSDISDEEEDDDDDEDNDDDDEDVE) show a composition bias toward acidic residues. A compositionally biased stretch (polar residues) spans 579-596 (SPGNSFEEATQQDNGYQD). Polar residues predominate over residues 779–800 (SKVNVTDNCESKGTQANAKNIL). One can recognise a UBC core domain in the interval 850–1010 (QWFKKVDQDW…TFLLNCKTMM (161 aa)). The Glycyl thioester intermediate role is filled by C936.

It belongs to the ubiquitin-conjugating enzyme family.

It catalyses the reaction S-ubiquitinyl-[E1 ubiquitin-activating enzyme]-L-cysteine + [E2 ubiquitin-conjugating enzyme]-L-cysteine = [E1 ubiquitin-activating enzyme]-L-cysteine + S-ubiquitinyl-[E2 ubiquitin-conjugating enzyme]-L-cysteine.. It participates in protein modification; protein ubiquitination. In terms of biological role, accepts the ubiquitin from the E1 complex and catalyzes its covalent attachment to other proteins. This chain is Probable ubiquitin-conjugating enzyme E2 23 (UBC23), found in Arabidopsis thaliana (Mouse-ear cress).